The chain runs to 89 residues: Translation initiation factor IF-1, chloroplastic (89 aa).

Residues 1 to 72 (MKKQDLIDME…TKGRIIYRLR (72 aa)) enclose the S1-like domain.

The protein belongs to the IF-1 family. As to quaternary structure, component of the 30S ribosomal translation pre-initiation complex which assembles on the 30S ribosome in the order IF-2 and IF-3, IF-1 and N-formylmethionyl-tRNA(fMet); mRNA recruitment can occur at any time during PIC assembly.

Its subcellular location is the plastid. It is found in the chloroplast. Functionally, one of the essential components for the initiation of protein synthesis. Stabilizes the binding of IF-2 and IF-3 on the 30S subunit to which N-formylmethionyl-tRNA(fMet) subsequently binds. Helps modulate mRNA selection, yielding the 30S pre-initiation complex (PIC). Upon addition of the 50S ribosomal subunit IF-1, IF-2 and IF-3 are released leaving the mature 70S translation initiation complex. The sequence is that of Translation initiation factor IF-1, chloroplastic from Angiopteris evecta (Mule's foot fern).